Here is a 1335-residue protein sequence, read N- to C-terminus: Aldehyde oxidase 3 (1335 aa).

Residues 8-95 form the 2Fe-2S ferredoxin-type domain; the sequence is DELIFFVNGK…GAAVTTVEGI (88 aa). [2Fe-2S] cluster-binding residues include C47, C52, C55, and C77. Q116 contributes to the Mo-molybdopterin binding site. 4 residues coordinate [2Fe-2S] cluster: C117, C120, C152, and C154. Positions 236 to 421 constitute an FAD-binding PCMH-type domain; that stretch reads FRGERTTWIA…ISVFVPRSSK (186 aa). 264–271 provides a ligand contact to FAD; that stretch reads LVIGNTYL. Phosphoserine is present on S320. FAD is bound by residues S354, H358, D367, and L411. Positions 802, 1043, and 1199 each coordinate Mo-molybdopterin. The Proton acceptor; for azaheterocycle hydroxylase activity role is filled by E1266.

The protein belongs to the xanthine dehydrogenase family. Homodimer. The cofactor is [2Fe-2S] cluster. It depends on FAD as a cofactor. Mo-molybdopterin serves as cofactor. Highly expressed in liver (at protein level). In liver, the expression is greater in males than females.

The protein localises to the cytoplasm. It catalyses the reaction an aldehyde + O2 + H2O = a carboxylate + H2O2 + H(+). Its activity is regulated as follows. Inhibited by potassium cyanide, menadione, benzamidine, raloxifene and norharmane. Oxidase with broad substrate specificity, oxidizing aromatic azaheterocycles, such as N1-methylnicotinamide and phthalazine, as well as aldehydes, such as benzaldehyde, retinal and pyridoxal. Plays a key role in the metabolism of xenobiotics and drugs containing aromatic azaheterocyclic substituents. Is probably involved in the regulation of reactive oxygen species homeostasis. May be a prominent source of superoxide generation via the one-electron reduction of molecular oxygen. May also catalyze nitric oxide (NO) production via the reduction of nitrite to NO with NADH or aldehyde as electron donor. This Mus musculus (Mouse) protein is Aldehyde oxidase 3 (Aox3).